Consider the following 333-residue polypeptide: Homeobox protein Hox-D13 (333 aa).

A disordered region spans residues 1 to 24; the sequence is MDGLRTDGGAAGAAPASSSSSSSV. Over residues 12 to 24 the composition is skewed to low complexity; it reads GAAPASSSSSSSV. The homeobox DNA-binding region spans 266-325; that stretch reads GRKKRVPYTKLQLKELENEYAINKFINKDKRRRISAATNLSERQVTIWFQNRRVKDKKIV.

Belongs to the Abd-B homeobox family.

Its subcellular location is the nucleus. In terms of biological role, sequence-specific transcription factor that binds gene promoters and activates their transcription. Part of a developmental regulatory system that provides cells with specific positional identities on the anterior-posterior axis. In Carollia perspicillata (Seba's short-tailed bat), this protein is Homeobox protein Hox-D13 (HOXD13).